Consider the following 246-residue polypeptide: Carboxylesterase (246 aa).

S93 serves as the catalytic Nucleophile. Residues D192 and H222 each act as charge relay system in the active site.

It belongs to the lipase/esterase LIP3/BchO family. In terms of assembly, homodimer.

It carries out the reaction a carboxylic ester + H2O = an alcohol + a carboxylate + H(+). In terms of biological role, involved in the detoxification of xenobiotics. Shows maximal activity with C6 substrates, with gradually decreasing activity from C8 to C12 substrates. No activity for higher chain length substrates acids rather than long-chain ones. This Geobacillus stearothermophilus (Bacillus stearothermophilus) protein is Carboxylesterase (est).